Consider the following 247-residue polypeptide: tRNA pseudouridine synthase A (247 aa).

The active-site Nucleophile is the D52. A substrate-binding site is contributed by Y113.

It belongs to the tRNA pseudouridine synthase TruA family. In terms of assembly, homodimer.

It catalyses the reaction uridine(38/39/40) in tRNA = pseudouridine(38/39/40) in tRNA. In terms of biological role, formation of pseudouridine at positions 38, 39 and 40 in the anticodon stem and loop of transfer RNAs. The polypeptide is tRNA pseudouridine synthase A (Bartonella bacilliformis (strain ATCC 35685 / KC583 / Herrer 020/F12,63)).